We begin with the raw amino-acid sequence, 477 residues long: Cysteine--tRNA ligase (477 aa).

Cys30 contacts Zn(2+). The 'HIGH' region motif lies at 32 to 42 (PTVYDYNHIGH). Zn(2+)-binding residues include Cys209, His234, and Glu238. Positions 267-271 (KMSKS) match the 'KMSKS' region motif. Lys270 provides a ligand contact to ATP.

The protein belongs to the class-I aminoacyl-tRNA synthetase family. The cofactor is Zn(2+).

The protein localises to the cytoplasm. It carries out the reaction tRNA(Cys) + L-cysteine + ATP = L-cysteinyl-tRNA(Cys) + AMP + diphosphate. This chain is Cysteine--tRNA ligase, found in Staphylothermus marinus (strain ATCC 43588 / DSM 3639 / JCM 9404 / F1).